Here is a 353-residue protein sequence, read N- to C-terminus: Photosystem II protein D1 (353 aa).

Position 2 is an N-acetylthreonine (Thr-2). Thr-2 carries the phosphothreonine modification. 3 helical membrane-spanning segments follow: residues Tyr-29–Ser-46, His-118–Leu-133, and Trp-142–Ala-156. Chlorophyll a is bound at residue His-118. Position 126 (Tyr-126) interacts with pheophytin a. Residues Asp-170 and Glu-189 each coordinate [CaMn4O5] cluster. A helical membrane pass occupies residues Phe-197–Leu-218. Chlorophyll a is bound at residue His-198. A quinone-binding positions include His-215 and Ser-264–Phe-265. Residue His-215 participates in Fe cation binding. Position 272 (His-272) interacts with Fe cation. The helical transmembrane segment at Phe-274–Leu-288 threads the bilayer. [CaMn4O5] cluster is bound by residues His-332, Glu-333, Asp-342, and Ala-344. Residues Ala-345–Gly-353 constitute a propeptide that is removed on maturation.

It belongs to the reaction center PufL/M/PsbA/D family. As to quaternary structure, PSII is composed of 1 copy each of membrane proteins PsbA, PsbB, PsbC, PsbD, PsbE, PsbF, PsbH, PsbI, PsbJ, PsbK, PsbL, PsbM, PsbT, PsbX, PsbY, PsbZ, Psb30/Ycf12, at least 3 peripheral proteins of the oxygen-evolving complex and a large number of cofactors. It forms dimeric complexes. The cofactor is The D1/D2 heterodimer binds P680, chlorophylls that are the primary electron donor of PSII, and subsequent electron acceptors. It shares a non-heme iron and each subunit binds pheophytin, quinone, additional chlorophylls, carotenoids and lipids. D1 provides most of the ligands for the Mn4-Ca-O5 cluster of the oxygen-evolving complex (OEC). There is also a Cl(-1) ion associated with D1 and D2, which is required for oxygen evolution. The PSII complex binds additional chlorophylls, carotenoids and specific lipids.. Post-translationally, tyr-161 forms a radical intermediate that is referred to as redox-active TyrZ, YZ or Y-Z. C-terminally processed by CTPA; processing is essential to allow assembly of the oxygen-evolving complex and thus photosynthetic growth.

The protein localises to the plastid. The protein resides in the chloroplast thylakoid membrane. It carries out the reaction 2 a plastoquinone + 4 hnu + 2 H2O = 2 a plastoquinol + O2. Functionally, photosystem II (PSII) is a light-driven water:plastoquinone oxidoreductase that uses light energy to abstract electrons from H(2)O, generating O(2) and a proton gradient subsequently used for ATP formation. It consists of a core antenna complex that captures photons, and an electron transfer chain that converts photonic excitation into a charge separation. The D1/D2 (PsbA/PsbD) reaction center heterodimer binds P680, the primary electron donor of PSII as well as several subsequent electron acceptors. The polypeptide is Photosystem II protein D1 (Landoltia punctata (Dotted duckmeat)).